The chain runs to 299 residues: Protoheme IX farnesyltransferase (299 aa).

9 helical membrane-spanning segments follow: residues 26–46 (VNAL…PDGL), 53–73 (FAAT…NCLI), 94–114 (LHSV…LSVL), 121–141 (LTMW…TLLL), 149–169 (IVIG…AVSG), 175–195 (ALLL…SLAL), 217–239 (YTRL…PFAI), 243–265 (GWIY…WRLL), and 277–297 (FRFS…DHYL).

This sequence belongs to the UbiA prenyltransferase family. Protoheme IX farnesyltransferase subfamily.

Its subcellular location is the cell inner membrane. The enzyme catalyses heme b + (2E,6E)-farnesyl diphosphate + H2O = Fe(II)-heme o + diphosphate. Its pathway is porphyrin-containing compound metabolism; heme O biosynthesis; heme O from protoheme: step 1/1. Its function is as follows. Converts heme B (protoheme IX) to heme O by substitution of the vinyl group on carbon 2 of heme B porphyrin ring with a hydroxyethyl farnesyl side group. This chain is Protoheme IX farnesyltransferase, found in Azoarcus sp. (strain BH72).